The primary structure comprises 99 residues: Large ribosomal subunit protein uL23 (99 aa).

Belongs to the universal ribosomal protein uL23 family. In terms of assembly, part of the 50S ribosomal subunit. Contacts protein L29, and trigger factor when it is bound to the ribosome.

In terms of biological role, one of the early assembly proteins it binds 23S rRNA. One of the proteins that surrounds the polypeptide exit tunnel on the outside of the ribosome. Forms the main docking site for trigger factor binding to the ribosome. The polypeptide is Large ribosomal subunit protein uL23 (Francisella philomiragia subsp. philomiragia (strain ATCC 25017 / CCUG 19701 / FSC 153 / O#319-036)).